The following is a 210-amino-acid chain: Uridine kinase (210 aa).

Residue G12–T19 participates in ATP binding.

Belongs to the uridine kinase family.

The protein resides in the cytoplasm. It carries out the reaction uridine + ATP = UMP + ADP + H(+). The enzyme catalyses cytidine + ATP = CMP + ADP + H(+). It functions in the pathway pyrimidine metabolism; CTP biosynthesis via salvage pathway; CTP from cytidine: step 1/3. Its pathway is pyrimidine metabolism; UMP biosynthesis via salvage pathway; UMP from uridine: step 1/1. The chain is Uridine kinase from Leuconostoc citreum (strain KM20).